A 172-amino-acid polypeptide reads, in one-letter code: NADH-quinone oxidoreductase subunit B (172 aa).

[4Fe-4S] cluster contacts are provided by C52, C53, C117, and C147.

Belongs to the complex I 20 kDa subunit family. NDH-1 is composed of 14 different subunits. Subunits NuoB, C, D, E, F, and G constitute the peripheral sector of the complex. Requires [4Fe-4S] cluster as cofactor.

The protein localises to the cell inner membrane. It catalyses the reaction a quinone + NADH + 5 H(+)(in) = a quinol + NAD(+) + 4 H(+)(out). Its function is as follows. NDH-1 shuttles electrons from NADH, via FMN and iron-sulfur (Fe-S) centers, to quinones in the respiratory chain. Couples the redox reaction to proton translocation (for every two electrons transferred, four hydrogen ions are translocated across the cytoplasmic membrane), and thus conserves the redox energy in a proton gradient. This Ehrlichia ruminantium (strain Gardel) protein is NADH-quinone oxidoreductase subunit B.